We begin with the raw amino-acid sequence, 695 residues long: Nicastrin (695 aa).

The first 22 residues, Met1–Ala22, serve as a signal peptide directing secretion. Over Gln23–Gln654 the chain is Extracellular. Asn45, Asn108, Asn116, Asn138, Asn381, Asn461, Asn489, Asn585, and Asn609 each carry an N-linked (GlcNAc...) asparagine glycan. A helical transmembrane segment spans residues Val655–Ile675. Residues Ser676–Gly695 are Cytoplasmic-facing.

This sequence belongs to the nicastrin family. Component of the gamma-secretase complex, a complex composed of a presenilin (Psn) homodimer, nicastrin (Nct), Aph-1 and Pen-2.

It localises to the membrane. Its function is as follows. Essential subunit of the gamma-secretase complex, an endoprotease complex that catalyzes the intramembrane cleavage of integral membrane proteins such as Notch. It probably represents a stabilizing cofactor required for the assembly of the gamma-secretase complex. The polypeptide is Nicastrin (Drosophila melanogaster (Fruit fly)).